The primary structure comprises 85 residues: Small ribosomal subunit protein bS16 (85 aa).

It belongs to the bacterial ribosomal protein bS16 family.

In Clostridium kluyveri (strain NBRC 12016), this protein is Small ribosomal subunit protein bS16.